The primary structure comprises 151 residues: Deoxyuridine 5'-triphosphate nucleotidohydrolase (151 aa).

Residues 70 to 72 (RSG), Asn83, 87 to 89 (LID), and Met97 contribute to the substrate site.

This sequence belongs to the dUTPase family. Requires Mg(2+) as cofactor.

It carries out the reaction dUTP + H2O = dUMP + diphosphate + H(+). The protein operates within pyrimidine metabolism; dUMP biosynthesis; dUMP from dCTP (dUTP route): step 2/2. In terms of biological role, this enzyme is involved in nucleotide metabolism: it produces dUMP, the immediate precursor of thymidine nucleotides and it decreases the intracellular concentration of dUTP so that uracil cannot be incorporated into DNA. The polypeptide is Deoxyuridine 5'-triphosphate nucleotidohydrolase (Hamiltonella defensa subsp. Acyrthosiphon pisum (strain 5AT)).